Reading from the N-terminus, the 424-residue chain is L-glutamine:2-deoxy-scyllo-inosose aminotransferase (424 aa).

The residue at position 202 (Lys-202) is an N6-(pyridoxal phosphate)lysine.

This sequence belongs to the DegT/DnrJ/EryC1 family. L-glutamine:2-deoxy-scyllo-inosose/scyllo-inosose aminotransferase subfamily. Requires pyridoxal 5'-phosphate as cofactor.

It catalyses the reaction 2-deoxy-L-scyllo-inosose + L-glutamine = 2-deoxy-scyllo-inosamine + 2-oxoglutaramate. It carries out the reaction 3-amino-2,3-dideoxy-scyllo-inosose + L-glutamine = 2-deoxystreptamine + 2-oxoglutaramate. Its pathway is metabolic intermediate biosynthesis; 2-deoxystreptamine biosynthesis; 2-deoxystreptamine from D-glucose 6-phosphate: step 2/4. The protein operates within antibiotic biosynthesis; tobramycin biosynthesis. In terms of biological role, catalyzes the PLP-dependent transamination of 2-deoxy-scyllo-inosose (2-DOI) to form 2-deoxy-scyllo-inosamine (2-DOIA) using L-glutamine as the amino donor. Also catalyzes the transamination of 3-amino-2,3-dideoxy-scyllo-inosose (keto-2-DOIA) into 2-deoxystreptamine (2-DOS). In Streptoalloteichus tenebrarius (strain ATCC 17920 / DSM 40477 / JCM 4838 / CBS 697.72 / NBRC 16177 / NCIMB 11028 / NRRL B-12390 / A12253. 1 / ISP 5477) (Streptomyces tenebrarius), this protein is L-glutamine:2-deoxy-scyllo-inosose aminotransferase (tbmB).